Here is a 431-residue protein sequence, read N- to C-terminus: Tol-Pal system protein TolB (431 aa).

An N-terminal signal peptide occupies residues 1–26 (MSLMTKLGFRALVASCLITAGSAANA). Positions 406–431 (DGSAPPQILSVQGGSVREPSWGPFMQ) are disordered.

The protein belongs to the TolB family. In terms of assembly, the Tol-Pal system is composed of five core proteins: the inner membrane proteins TolA, TolQ and TolR, the periplasmic protein TolB and the outer membrane protein Pal. They form a network linking the inner and outer membranes and the peptidoglycan layer.

The protein resides in the periplasm. Functionally, part of the Tol-Pal system, which plays a role in outer membrane invagination during cell division and is important for maintaining outer membrane integrity. The sequence is that of Tol-Pal system protein TolB from Burkholderia cenocepacia (strain ATCC BAA-245 / DSM 16553 / LMG 16656 / NCTC 13227 / J2315 / CF5610) (Burkholderia cepacia (strain J2315)).